An 806-amino-acid chain; its full sequence is MAEPLKEEDGEDGSGEPPGRVKAEPVHTAASVVAKNLALLKARSFDVTFDVGDEYEIIETIGNGAYGVVSSARRRLTGQQVAIKKIPNAFDVVTNAKRTLRELKILKHFKHDNIIAIKDILRPTVPYGEFRSVYVVLDLMESDLHQIIHSSQPLTLEHVRYFLYQLLRGLKYMHSAQVIHRDLKPSNLLVNENCELKIGDFGMARGLCTSPAEHQYFMTEYVATRWYRAPELMLSLHEYTQAIDLWSVGCIFGEMLARRQLFPGKNYVHQLQLIMMVLGTPSPAVIQAVGAERVRAYIQSLPPRQPVPWETVYPGADRQALSLLGRMLRFEPSARISAAAALRHPFLAKYHDPDDEPDCAPPFDFAFDREALTRERIKEAIVAEIEDFHARREGIRQQIRFQPSLQPVASEPVCPDVEMPSPWAPSGDCAMESPPPALPPCSGPAPDTVDLTLQPAPPASELAPPKREGAISDNTKAALKAALLKSLRSRLRDGPSAPLEAPEPRKPVTAQERQREREEKRRRRQERAKEREKRRQERERKERGAGTLGGPSTDPLAGLVLSDNDRSLLERWTRMARPPVPAPAPAPAPTPKPSSAQPTSPPNGPVSQSTAPLQPAGSIPGPASQPVCPPPGPVPQPAGPVPAPLQTAPSTSLLASQSLVPPSGLPGSGAPEVLPYFPSGPPPPDPGLTPQPSTSESPDVNLVTQQLSKSQVEDPLPPVFSGTPKGSGAGYGVGFDLEEFLNQSFDMGVADGPQDGQADSASLSASLLADWLEGHGMNPADIESLQREIQMDSPMLLSDLPDLQEP.

The segment at 1–23 (MAEPLKEEDGEDGSGEPPGRVKA) is disordered. The residue at position 2 (alanine 2) is an N-acetylalanine. A required for cytoplasmic targeting region spans residues 2-77 (AEPLKEEDGE…VVSSARRRLT (76 aa)). The Protein kinase domain occupies 55–347 (YEIIETIGNG…AAAALRHPFL (293 aa)). ATP is bound by residues 61–69 (IGNGAYGVV) and lysine 84. A required for binding to MAP2K5 region spans residues 78 to 139 (GQQVAIKKIP…FRSVYVVLDL (62 aa)). Residues 140–406 (MESDLHQIIH…QQIRFQPSLQ (267 aa)) form a necessary for oligomerization region. Aspartate 182 acts as the Proton acceptor in catalysis. Residues 219–221 (TEY) carry the TXY motif. The tract at residues 407–806 (PVASEPVCPD…LSDLPDLQEP (400 aa)) is may not be required for kinase activity; required to stimulate MEF2C activity. Disordered regions lie at residues 424-475 (APSG…SDNT) and 488-727 (RSRL…PKGS). A compositionally biased stretch (pro residues) spans 433–443 (SPPPALPPCSG). 3 stretches are compositionally biased toward basic and acidic residues: residues 502 to 519 (PEPR…EREE), 527 to 544 (RAKE…KERG), and 563 to 573 (DNDRSLLERWT). The Nuclear localization signal motif lies at 505–539 (RKPVTAQERQREREEKRRRRQERAKEREKRRQERE). Composition is skewed to pro residues over residues 578-592 (PPVP…PTPK) and 627-643 (VCPP…PVPA). Residues 647–660 (TAPSTSLLASQSLV) are compositionally biased toward polar residues. A compositionally biased stretch (pro residues) spans 678-689 (PSGPPPPDPGLT). Residues 693-710 (STSESPDVNLVTQQLSKS) show a composition bias toward polar residues. Serine 710 carries the phosphoserine modification. The residue at position 723 (threonine 723) is a Phosphothreonine.

Belongs to the protein kinase superfamily. CMGC Ser/Thr protein kinase family. MAP kinase subfamily. As to quaternary structure, interacts with MAP2K5. Forms oligomers. Interacts with MEF2A, MEF2C and MEF2D; the interaction phosphorylates the MEF2s and enhances transcriptional activity of MEF2A, MEF2C but not MEF2D. Interacts with SGK1. Interacts with PML. Interacts (via N-terminal half) with HSP90AB1-CDC37 chaperone complex in resting cells; the interaction is MAP2K5-independent and prevents MAPK7 from ubiquitination and proteasomal degradation. Interacts with STUB1/CHIP; the interaction is enhanced in the presence of IGF1 or MAP2K5 and promotes STUB1/CHIP E3 ligase activity. Mg(2+) serves as cofactor. Dually phosphorylated on Thr-219 and Tyr-221, which activates the enzyme.

The protein localises to the cytoplasm. It is found in the nucleus. It localises to the PML body. It carries out the reaction L-seryl-[protein] + ATP = O-phospho-L-seryl-[protein] + ADP + H(+). It catalyses the reaction L-threonyl-[protein] + ATP = O-phospho-L-threonyl-[protein] + ADP + H(+). With respect to regulation, activated by tyrosine and threonine phosphorylation. Activated in response to hyperosmolarity, hydrogen peroxide, and epidermal growth factor (EGF). In terms of biological role, plays a role in various cellular processes such as proliferation, differentiation and cell survival. The upstream activator of MAPK7 is the MAPK kinase MAP2K5. Upon activation, it translocates to the nucleus and phosphorylates various downstream targets including MEF2C. EGF activates MAPK7 through a Ras-independent and MAP2K5-dependent pathway. As part of the MAPK/ERK signaling pathway, acts as a negative regulator of apoptosis in cardiomyocytes via interaction with STUB1/CHIP and promotion of STUB1-mediated ubiquitination and degradation of ICER-type isoforms of CREM. May have a role in muscle cell differentiation. May be important for endothelial function and maintenance of blood vessel integrity. MAP2K5 and MAPK7 interact specifically with one another and not with MEK1/ERK1 or MEK2/ERK2 pathways. Phosphorylates SGK1 at Ser-78 and this is required for growth factor-induced cell cycle progression. Involved in the regulation of p53/TP53 by disrupting the PML-MDM2 interaction. This is Mitogen-activated protein kinase 7 (Mapk7) from Rattus norvegicus (Rat).